The primary structure comprises 228 residues: Ras-related protein Rab-33B (228 aa).

Positions 41, 42, 43, 44, 45, 46, 60, and 63 each coordinate GTP. Position 45 (threonine 45) interacts with Mg(2+). A Switch 1 motif is present at residues 54 to 66 (GRFPQRTEATIGV). Mg(2+) is bound by residues threonine 63 and aspartate 86. The Switch 2 signature appears at 87 to 106 (TAGQERFRKSMVQHYYRNVH). GTP-binding residues include glycine 89, asparagine 146, lysine 147, aspartate 149, alanine 177, and lysine 178. Residues cysteine 226 and cysteine 228 are each lipidated (S-geranylgeranyl cysteine). Cysteine 228 bears the Cysteine methyl ester mark.

The protein belongs to the small GTPase superfamily. Rab family. Interacts (GTP- and GDP-bound forms) with ATG16L1; the complex consists of a tetramer where two RAB33B molecules bind independently one molecule of the ATG16L1 homodimer; the interaction promotes ATG12-ATG5-ATG16L1 complex recruitment to phagophores. Interacts with ATG16L2; however interaction is approximately hundred times lower than for ATG16L1. Interacts with RIC1 (via C-terminus domain); the interaction is direct with a preference for RAB33B-GTP. Interacts with RGP1. It depends on Mg(2+) as a cofactor.

Its subcellular location is the golgi apparatus membrane. It is found in the golgi apparatus. It localises to the cis-Golgi network. The protein resides in the preautophagosomal structure membrane. It carries out the reaction GTP + H2O = GDP + phosphate + H(+). With respect to regulation, regulated by guanine nucleotide exchange factors (GEFs) which promote the exchange of bound GDP for free GTP. Regulated by GTPase activating proteins (GAPs) such as SGSM2 which increase the GTP hydrolysis activity. Inhibited by GDP dissociation inhibitors (GDIs). In terms of biological role, the small GTPases Rab are key regulators of intracellular membrane trafficking, from the formation of transport vesicles to their fusion with membranes. Rabs cycle between an inactive GDP-bound form and an active GTP-bound form that is able to recruit to membranes different sets of downstream effectors directly responsible for vesicle formation, movement, tethering and fusion. RAB33B acts, in coordination with RAB6A, to regulate intra-Golgi retrograde trafficking. Participates in autophagosome formation by recruiting the ATG12-ATG5-ATG16L1 complex to phagophores, probably in a nucleotide-independent manner. The sequence is that of Ras-related protein Rab-33B (RAB33B) from Gallus gallus (Chicken).